An 83-amino-acid polypeptide reads, in one-letter code: Small ribosomal subunit protein eS21 (83 aa).

The protein belongs to the eukaryotic ribosomal protein eS21 family. Component of the 40S small ribosomal subunit.

It is found in the cytoplasm. The protein resides in the cytosol. The protein localises to the rough endoplasmic reticulum. The polypeptide is Small ribosomal subunit protein eS21 (RpS21) (Agriotes lineatus (Lined click beetle)).